A 141-amino-acid chain; its full sequence is 6,7-dimethyl-8-ribityllumazine synthase (141 aa).

Residues F13, 45–47, and 69–71 each bind 5-amino-6-(D-ribitylamino)uracil; these read SFE and AII. 74–75 contacts (2S)-2-hydroxy-3-oxobutyl phosphate; sequence DT. The active-site Proton donor is the H77. L102 contacts 5-amino-6-(D-ribitylamino)uracil. R117 provides a ligand contact to (2S)-2-hydroxy-3-oxobutyl phosphate.

This sequence belongs to the DMRL synthase family.

It catalyses the reaction (2S)-2-hydroxy-3-oxobutyl phosphate + 5-amino-6-(D-ribitylamino)uracil = 6,7-dimethyl-8-(1-D-ribityl)lumazine + phosphate + 2 H2O + H(+). It functions in the pathway cofactor biosynthesis; riboflavin biosynthesis; riboflavin from 2-hydroxy-3-oxobutyl phosphate and 5-amino-6-(D-ribitylamino)uracil: step 1/2. Its function is as follows. Catalyzes the formation of 6,7-dimethyl-8-ribityllumazine by condensation of 5-amino-6-(D-ribitylamino)uracil with 3,4-dihydroxy-2-butanone 4-phosphate. This is the penultimate step in the biosynthesis of riboflavin. This chain is 6,7-dimethyl-8-ribityllumazine synthase, found in Methanopyrus kandleri (strain AV19 / DSM 6324 / JCM 9639 / NBRC 100938).